The sequence spans 88 residues: Small ribosomal subunit protein bS20 (88 aa).

The protein belongs to the bacterial ribosomal protein bS20 family.

Its function is as follows. Binds directly to 16S ribosomal RNA. The chain is Small ribosomal subunit protein bS20 from Micrococcus luteus (strain ATCC 4698 / DSM 20030 / JCM 1464 / CCM 169 / CCUG 5858 / IAM 1056 / NBRC 3333 / NCIMB 9278 / NCTC 2665 / VKM Ac-2230) (Micrococcus lysodeikticus).